The following is a 682-amino-acid chain: Putative protein RhsE (682 aa).

Residues 348–360 (ENGEREKAQRRSL) show a composition bias toward basic and acidic residues. The tract at residues 348–372 (ENGEREKAQRRSLAETLQQEGSENG) is disordered.

Belongs to the RHS family.

Functionally, rhs elements have a nonessential function. They may play an important role in the natural ecology of the cell. This chain is Putative protein RhsE (rhsE), found in Escherichia coli (strain K12).